A 737-amino-acid chain; its full sequence is FYVE, RhoGEF and PH domain-containing protein 3 (737 aa).

The disordered stretch occupies residues 1-151 (MESGGGSSTP…KADKDAGLAQ (151 aa)). Residues 126 to 136 (ADSDVGEEPDS) show a composition bias toward acidic residues. Ser-128 carries the post-translational modification Phosphoserine. In terms of domain architecture, DH spans 157–341 (KLLHIAQELL…STAANHSNAA (185 aa)). In terms of domain architecture, PH 1 spans 370–469 (ELIKEGQIQK…WIQIIQATIE (100 aa)). Positions 487 to 533 (QDEDPSLSPDMPITSTSPVEPVVTTEGGSGAAGLEPRKLSSKTRRDK) are disordered. Residues 500 to 512 (TSTSPVEPVVTTE) are compositionally biased toward low complexity. The segment covering 521–533 (EPRKLSSKTRRDK) has biased composition (basic and acidic residues). Residues 532–588 (DKEKQSCKSCGETFNSITKRRHHCKLCGVVICGKCSEFKAENSRQSRVCRECFLTQP) form an FYVE-type zinc finger. The Zn(2+) site is built by Cys-538, Cys-541, Cys-555, Cys-558, Cys-563, Cys-566, Cys-580, and Cys-583. 2 disordered regions span residues 589 to 620 (VAPE…SLLC) and 713 to 737 (AARG…AAAP). A PH 2 domain is found at 616–715 (PSLLCGPLRL…WLETLSTAAR (100 aa)).

The protein localises to the cytoplasm. The protein resides in the cytoskeleton. In terms of biological role, promotes the formation of filopodia. May activate CDC42, a member of the Ras-like family of Rho- and Rac proteins, by exchanging bound GDP for free GTP. Plays a role in regulating the actin cytoskeleton and cell shape. The chain is FYVE, RhoGEF and PH domain-containing protein 3 (FGD3) from Pongo abelii (Sumatran orangutan).